Here is a 332-residue protein sequence, read N- to C-terminus: HTH-type transcriptional regulator RegA (332 aa).

Positions 1 to 57 (MATSIKDVAREAGVSIATVSRVLNDIDVVNEDTKKKVLDAIKELGYRPNIVARSLKT) constitute an HTH lacI-type domain. Positions 5-24 (IKDVAREAGVSIATVSRVLN) form a DNA-binding region, H-T-H motif.

In terms of biological role, involved in the regulation of amylase production. This chain is HTH-type transcriptional regulator RegA (regA), found in Clostridium saccharobutylicum.